We begin with the raw amino-acid sequence, 387 residues long: Phosphoglycerate kinase (387 aa).

Substrate-binding positions include 21-23 (DLN), Arg-36, 59-62 (HLGR), Arg-113, and Arg-146. ATP contacts are provided by residues Lys-197, Glu-314, and 340 to 343 (GGDT).

This sequence belongs to the phosphoglycerate kinase family. As to quaternary structure, monomer.

Its subcellular location is the cytoplasm. It catalyses the reaction (2R)-3-phosphoglycerate + ATP = (2R)-3-phospho-glyceroyl phosphate + ADP. It functions in the pathway carbohydrate degradation; glycolysis; pyruvate from D-glyceraldehyde 3-phosphate: step 2/5. This Photorhabdus luminescens (Xenorhabdus luminescens) protein is Phosphoglycerate kinase.